Reading from the N-terminus, the 579-residue chain is O-fucosyltransferase 24 (579 aa).

The helical; Signal-anchor for type II membrane protein transmembrane segment at 58–78 (LWAFSLFLLSILGISLRLGLC) threads the bilayer. N-linked (GlcNAc...) asparagine glycosylation occurs at Asn-133. Residue 355-357 (HLR) coordinates substrate. Asn-528, Asn-573, and Asn-576 each carry an N-linked (GlcNAc...) asparagine glycan.

It belongs to the glycosyltransferase GT106 family.

The protein localises to the membrane. The protein operates within glycan metabolism. This chain is O-fucosyltransferase 24, found in Arabidopsis thaliana (Mouse-ear cress).